Here is a 210-residue protein sequence, read N- to C-terminus: Neuroendocrine protein 7B2 (210 aa).

The N-terminal stretch at 1–24 (MTSRMAILSGLLFWLLLEWNPAFA) is a signal peptide. C118 and C128 are oxidised to a cystine. Phosphoserine is present on residues S139 and S203.

Belongs to the 7B2 family. Interacts with PCSK2/PC2 early in the secretory pathway. Dissociation occurs at later stages. In terms of processing, proteolytically cleaved in the Golgi by a furin-like convertase to generate bioactive peptides. Post-translationally, sulfated on tyrosine residues.

The protein resides in the secreted. In terms of biological role, acts as a molecular chaperone for PCSK2/PC2, preventing its premature activation in the regulated secretory pathway. Binds to inactive PCSK2 in the endoplasmic reticulum and facilitates its transport from there to later compartments of the secretory pathway where it is proteolytically matured and activated. Also required for cleavage of PCSK2 but does not appear to be involved in its folding. Plays a role in regulating pituitary hormone secretion. The C-terminal peptide inhibits PCSK2 in vitro. This is Neuroendocrine protein 7B2 (Scg5) from Rattus norvegicus (Rat).